Consider the following 458-residue polypeptide: Light-independent protochlorophyllide reductase subunit N (458 aa).

Residues Cys-20, Cys-45, and Cys-105 each coordinate [4Fe-4S] cluster.

The protein belongs to the BchN/ChlN family. Protochlorophyllide reductase is composed of three subunits; ChlL, ChlN and ChlB. Forms a heterotetramer of two ChlB and two ChlN subunits. [4Fe-4S] cluster is required as a cofactor.

It localises to the plastid. The protein localises to the chloroplast. It catalyses the reaction chlorophyllide a + oxidized 2[4Fe-4S]-[ferredoxin] + 2 ADP + 2 phosphate = protochlorophyllide a + reduced 2[4Fe-4S]-[ferredoxin] + 2 ATP + 2 H2O. Its pathway is porphyrin-containing compound metabolism; chlorophyll biosynthesis (light-independent). In terms of biological role, component of the dark-operative protochlorophyllide reductase (DPOR) that uses Mg-ATP and reduced ferredoxin to reduce ring D of protochlorophyllide (Pchlide) to form chlorophyllide a (Chlide). This reaction is light-independent. The NB-protein (ChlN-ChlB) is the catalytic component of the complex. This Angiopteris evecta (Mule's foot fern) protein is Light-independent protochlorophyllide reductase subunit N.